Reading from the N-terminus, the 418-residue chain is Glutamyl-tRNA reductase (418 aa).

Substrate is bound by residues 49-52 (TCNR), Ser-109, 114-116 (EPQ), and Gln-120. Catalysis depends on Cys-50, which acts as the Nucleophile. 189-194 (GAGETI) contacts NADP(+).

The protein belongs to the glutamyl-tRNA reductase family. In terms of assembly, homodimer.

The enzyme catalyses (S)-4-amino-5-oxopentanoate + tRNA(Glu) + NADP(+) = L-glutamyl-tRNA(Glu) + NADPH + H(+). It participates in porphyrin-containing compound metabolism; protoporphyrin-IX biosynthesis; 5-aminolevulinate from L-glutamyl-tRNA(Glu): step 1/2. Functionally, catalyzes the NADPH-dependent reduction of glutamyl-tRNA(Glu) to glutamate 1-semialdehyde (GSA). The protein is Glutamyl-tRNA reductase of Cronobacter sakazakii (strain ATCC BAA-894) (Enterobacter sakazakii).